Reading from the N-terminus, the 331-residue chain is D-lactate dehydrogenase (331 aa).

Residues 155-156, D175, 206-207, N212, 233-235, and D259 contribute to the NAD(+) site; these read HI, VP, and AAR. The active site involves R235. The active site involves E264. The Proton donor role is filled by H296.

This sequence belongs to the D-isomer specific 2-hydroxyacid dehydrogenase family. As to quaternary structure, homodimer.

The enzyme catalyses (R)-lactate + NAD(+) = pyruvate + NADH + H(+). This Leuconostoc mesenteroides subsp. cremoris protein is D-lactate dehydrogenase.